The following is a 132-amino-acid chain: NADH-quinone oxidoreductase subunit A 2 (132 aa).

3 helical membrane-spanning segments follow: residues 10-30 (WALL…LGLG), 66-86 (LVAM…LWAV), and 93-113 (WAGF…LFYL).

Belongs to the complex I subunit 3 family. NDH-1 is composed of 13 different subunits. Subunits NuoA, H, J, K, L, M, N constitute the membrane sector of the complex.

It is found in the cell inner membrane. The enzyme catalyses a quinone + NADH + 5 H(+)(in) = a quinol + NAD(+) + 4 H(+)(out). Functionally, NDH-1 shuttles electrons from NADH, via FMN and iron-sulfur (Fe-S) centers, to quinones in the respiratory chain. The immediate electron acceptor for the enzyme in this species is believed to be ubiquinone. Couples the redox reaction to proton translocation (for every two electrons transferred, four hydrogen ions are translocated across the cytoplasmic membrane), and thus conserves the redox energy in a proton gradient. The protein is NADH-quinone oxidoreductase subunit A 2 of Pseudomonas aeruginosa (strain UCBPP-PA14).